Reading from the N-terminus, the 455-residue chain is Ribulose bisphosphate carboxylase large chain (455 aa).

Lys-5 is modified (N6,N6,N6-trimethyllysine). 2 residues coordinate substrate: Asn-114 and Thr-164. Lys-166 acts as the Proton acceptor in catalysis. Residue Lys-168 participates in substrate binding. Mg(2+)-binding residues include Lys-192, Asp-194, and Glu-195. Lys-192 is subject to N6-carboxylysine. Catalysis depends on His-285, which acts as the Proton acceptor. 3 residues coordinate substrate: Arg-286, His-318, and Ser-370.

The protein belongs to the RuBisCO large chain family. Type I subfamily. In terms of assembly, heterohexadecamer of 8 large chains and 8 small chains; disulfide-linked. The disulfide link is formed within the large subunit homodimers. It depends on Mg(2+) as a cofactor. In terms of processing, the disulfide bond which can form in the large chain dimeric partners within the hexadecamer appears to be associated with oxidative stress and protein turnover.

The protein resides in the plastid. Its subcellular location is the chloroplast. The enzyme catalyses 2 (2R)-3-phosphoglycerate + 2 H(+) = D-ribulose 1,5-bisphosphate + CO2 + H2O. It catalyses the reaction D-ribulose 1,5-bisphosphate + O2 = 2-phosphoglycolate + (2R)-3-phosphoglycerate + 2 H(+). RuBisCO catalyzes two reactions: the carboxylation of D-ribulose 1,5-bisphosphate, the primary event in carbon dioxide fixation, as well as the oxidative fragmentation of the pentose substrate in the photorespiration process. Both reactions occur simultaneously and in competition at the same active site. This is Ribulose bisphosphate carboxylase large chain from Lupinus microcarpus var. densiflorus (Whitewhorl lupine).